A 289-amino-acid chain; its full sequence is Cyclo(L-tyrosyl-L-tyrosyl) synthase (289 aa).

The interval methionine 1 to arginine 48 is disordered. Catalysis depends on serine 88, which acts as the Nucleophile. Residues asparagine 91, tyrosine 229 to glutamate 233, and tyrosine 253 each bind substrate.

Belongs to the CDPS family. As to quaternary structure, homodimer.

The enzyme catalyses 2 L-tyrosyl-tRNA(Tyr) = cyclo(L-tyrosyl-L-tyrosyl) + 2 tRNA(Tyr). Involved in the biosynthesis of mycocyclosin. It uses activated amino acids in the form of aminoacyl-tRNAs (aa-tRNAs) as substrates to catalyze the ATP-independent formation of cyclodipeptides which are intermediates in diketopiperazine (DKP) biosynthetic pathways. Catalyzes the formation of cyclo(L-Tyr-L-Tyr) (cYY) from L-tyrosyl-tRNA(Tyr). In Mycobacterium tuberculosis (strain CDC 1551 / Oshkosh), this protein is Cyclo(L-tyrosyl-L-tyrosyl) synthase.